The following is a 266-amino-acid chain: Norfluorocurarine synthase 2 (266 aa).

Residues 11-121 (HFVLVHGAGH…VMPDSTHPPN (111 aa)) form the AB hydrolase-1 domain. Residues serine 86, aspartate 216, and histidine 244 contribute to the active site.

It belongs to the AB hydrolase superfamily. As to quaternary structure, homodimer.

It carries out the reaction 17-dehydropreakuammicine + H2O = norfluorocurarine + methanol + CO2. It participates in alkaloid biosynthesis. Functionally, hydrolase involved in the biosynthesis of curare monoterpene indole alkaloids (MIAs), natural products such as diaboline, a pharmacologically active compound used to regulate blood pressure. Curare alkaloids act as animal glycine receptor antagonists. Catalyzes the conversion of dehydropreakuammicine to norfluorocurarine. The chain is Norfluorocurarine synthase 2 from Strychnos sp.